Here is a 418-residue protein sequence, read N- to C-terminus: UDP-N-acetylglucosamine 1-carboxyvinyltransferase (418 aa).

Residue 22-23 (KN) coordinates phosphoenolpyruvate. Arginine 93 contacts UDP-N-acetyl-alpha-D-glucosamine. The Proton donor role is filled by cysteine 117. Cysteine 117 is subject to 2-(S-cysteinyl)pyruvic acid O-phosphothioketal. UDP-N-acetyl-alpha-D-glucosamine is bound by residues aspartate 305 and valine 327.

Belongs to the EPSP synthase family. MurA subfamily.

It is found in the cytoplasm. It catalyses the reaction phosphoenolpyruvate + UDP-N-acetyl-alpha-D-glucosamine = UDP-N-acetyl-3-O-(1-carboxyvinyl)-alpha-D-glucosamine + phosphate. Its pathway is cell wall biogenesis; peptidoglycan biosynthesis. Its function is as follows. Cell wall formation. Adds enolpyruvyl to UDP-N-acetylglucosamine. The chain is UDP-N-acetylglucosamine 1-carboxyvinyltransferase from Halorhodospira halophila (strain DSM 244 / SL1) (Ectothiorhodospira halophila (strain DSM 244 / SL1)).